Here is a 353-residue protein sequence, read N- to C-terminus: Biotin synthase (353 aa).

The Radical SAM core domain maps to 51–270 (NEVQCNQLLN…IALARIMMPK (220 aa)). Positions 66, 70, and 73 each coordinate [4Fe-4S] cluster. Residues Cys-110, Cys-141, Cys-201, and Arg-274 each coordinate [2Fe-2S] cluster. Residues 330–353 (APVEAHSHDHDHDHHDHHHGHSHS) are disordered. Residues 334 to 343 (AHSHDHDHDH) show a composition bias toward basic and acidic residues. The segment covering 344 to 353 (HDHHHGHSHS) has biased composition (basic residues).

The protein belongs to the radical SAM superfamily. Biotin synthase family. Homodimer. It depends on [4Fe-4S] cluster as a cofactor. Requires [2Fe-2S] cluster as cofactor.

It catalyses the reaction (4R,5S)-dethiobiotin + (sulfur carrier)-SH + 2 reduced [2Fe-2S]-[ferredoxin] + 2 S-adenosyl-L-methionine = (sulfur carrier)-H + biotin + 2 5'-deoxyadenosine + 2 L-methionine + 2 oxidized [2Fe-2S]-[ferredoxin]. It participates in cofactor biosynthesis; biotin biosynthesis; biotin from 7,8-diaminononanoate: step 2/2. Catalyzes the conversion of dethiobiotin (DTB) to biotin by the insertion of a sulfur atom into dethiobiotin via a radical-based mechanism. The sequence is that of Biotin synthase from Rhodopseudomonas palustris (strain HaA2).